A 128-amino-acid chain; its full sequence is Aspartate 1-decarboxylase (128 aa).

The active-site Schiff-base intermediate with substrate; via pyruvic acid is Ser25. At Ser25 the chain carries Pyruvic acid (Ser). Residue Thr57 coordinates substrate. The Proton donor role is filled by Tyr58. 73–75 (GSA) lines the substrate pocket.

The protein belongs to the PanD family. Heterooctamer of four alpha and four beta subunits. Requires pyruvate as cofactor. Is synthesized initially as an inactive proenzyme, which is activated by self-cleavage at a specific serine bond to produce a beta-subunit with a hydroxyl group at its C-terminus and an alpha-subunit with a pyruvoyl group at its N-terminus.

It is found in the cytoplasm. It carries out the reaction L-aspartate + H(+) = beta-alanine + CO2. Its pathway is cofactor biosynthesis; (R)-pantothenate biosynthesis; beta-alanine from L-aspartate: step 1/1. In terms of biological role, catalyzes the pyruvoyl-dependent decarboxylation of aspartate to produce beta-alanine. The sequence is that of Aspartate 1-decarboxylase from Paraburkholderia phytofirmans (strain DSM 17436 / LMG 22146 / PsJN) (Burkholderia phytofirmans).